A 204-amino-acid chain; its full sequence is Leucyl/phenylalanyl-tRNA--protein transferase (204 aa).

Belongs to the L/F-transferase family.

Its subcellular location is the cytoplasm. It catalyses the reaction N-terminal L-lysyl-[protein] + L-leucyl-tRNA(Leu) = N-terminal L-leucyl-L-lysyl-[protein] + tRNA(Leu) + H(+). The enzyme catalyses N-terminal L-arginyl-[protein] + L-leucyl-tRNA(Leu) = N-terminal L-leucyl-L-arginyl-[protein] + tRNA(Leu) + H(+). It carries out the reaction L-phenylalanyl-tRNA(Phe) + an N-terminal L-alpha-aminoacyl-[protein] = an N-terminal L-phenylalanyl-L-alpha-aminoacyl-[protein] + tRNA(Phe). In terms of biological role, functions in the N-end rule pathway of protein degradation where it conjugates Leu, Phe and, less efficiently, Met from aminoacyl-tRNAs to the N-termini of proteins containing an N-terminal arginine or lysine. This chain is Leucyl/phenylalanyl-tRNA--protein transferase, found in Brucella abortus (strain 2308).